A 488-amino-acid polypeptide reads, in one-letter code: Zinc metalloproteinase-disintegrin 8 (488 aa).

Positions 1 to 20 (MIQVLLVTICLAVFPYQGSS) are cleaved as a signal peptide. Residues 21–191 (IILESGNVND…KASQLNLPPE (171 aa)) constitute a propeptide that is removed on maturation. The Peptidase M12B domain occupies 198 to 396 (TYIELVVVAD…STTRCLHNEP (199 aa)). Residues Glu-201 and Asp-285 each coordinate Ca(2+). A glycan (N-linked (GlcNAc...) asparagine) is linked at Asn-296. Intrachain disulfides connect Cys-309/Cys-391, Cys-349/Cys-373, and Cys-351/Cys-356. Position 334 (His-334) interacts with Zn(2+). Residue Glu-335 is part of the active site. Residues His-338 and His-344 each contribute to the Zn(2+) site. Positions 391, 394, 409, 413, 416, and 419 each coordinate Ca(2+). One can recognise a Disintegrin domain in the interval 404-488 (PPFCGNYFKE…ADCPRNGLYG (85 aa)). 7 cysteine pairs are disulfide-bonded: Cys-407–Cys-426, Cys-418–Cys-436, Cys-420–Cys-431, Cys-430–Cys-453, Cys-444–Cys-450, Cys-449–Cys-474, and Cys-462–Cys-481. The Cell attachment site motif lies at 466-468 (RGD).

It belongs to the venom metalloproteinase (M12B) family. P-II subfamily. Requires Zn(2+) as cofactor. In terms of tissue distribution, expressed by the venom gland.

Its subcellular location is the secreted. Its function is as follows. Inhibits ADP-induced platelet aggregation (probably by binding integrin alpha-IIb/beta-3 (ITGA2B/ITGB3)) and degrades fibrinogen. The polypeptide is Zinc metalloproteinase-disintegrin 8 (Crotalus adamanteus (Eastern diamondback rattlesnake)).